Here is a 168-residue protein sequence, read N- to C-terminus: 2-C-methyl-D-erythritol 2,4-cyclodiphosphate synthase (168 aa).

Positions 13 and 15 each coordinate a divalent metal cation. Residues 13-15 and 39-40 each bind 4-CDP-2-C-methyl-D-erythritol 2-phosphate; these read DVH and HS. His47 is a binding site for a divalent metal cation. 4-CDP-2-C-methyl-D-erythritol 2-phosphate-binding positions include 61–63, 66–70, Phe144, and Arg147; these read DIG and FPDTD.

This sequence belongs to the IspF family. As to quaternary structure, homotrimer. A divalent metal cation is required as a cofactor.

It catalyses the reaction 4-CDP-2-C-methyl-D-erythritol 2-phosphate = 2-C-methyl-D-erythritol 2,4-cyclic diphosphate + CMP. The protein operates within isoprenoid biosynthesis; isopentenyl diphosphate biosynthesis via DXP pathway; isopentenyl diphosphate from 1-deoxy-D-xylulose 5-phosphate: step 4/6. Functionally, involved in the biosynthesis of isopentenyl diphosphate (IPP) and dimethylallyl diphosphate (DMAPP), two major building blocks of isoprenoid compounds. Catalyzes the conversion of 4-diphosphocytidyl-2-C-methyl-D-erythritol 2-phosphate (CDP-ME2P) to 2-C-methyl-D-erythritol 2,4-cyclodiphosphate (ME-CPP) with a corresponding release of cytidine 5-monophosphate (CMP). This chain is 2-C-methyl-D-erythritol 2,4-cyclodiphosphate synthase, found in Ralstonia nicotianae (strain ATCC BAA-1114 / GMI1000) (Ralstonia solanacearum).